The sequence spans 316 residues: 4-hydroxy-3-methylbut-2-enyl diphosphate reductase (316 aa).

Cys12 provides a ligand contact to [4Fe-4S] cluster. Positions 41 and 74 each coordinate (2E)-4-hydroxy-3-methylbut-2-enyl diphosphate. Residues His41 and His74 each contribute to the dimethylallyl diphosphate site. Residues His41 and His74 each contribute to the isopentenyl diphosphate site. Position 96 (Cys96) interacts with [4Fe-4S] cluster. His124 is a binding site for (2E)-4-hydroxy-3-methylbut-2-enyl diphosphate. His124 contacts dimethylallyl diphosphate. His124 lines the isopentenyl diphosphate pocket. The active-site Proton donor is the Glu126. A (2E)-4-hydroxy-3-methylbut-2-enyl diphosphate-binding site is contributed by Thr169. Cys199 serves as a coordination point for [4Fe-4S] cluster. Ser227, Ser228, Asn229, and Ser271 together coordinate (2E)-4-hydroxy-3-methylbut-2-enyl diphosphate. 4 residues coordinate dimethylallyl diphosphate: Ser227, Ser228, Asn229, and Ser271. Residues Ser227, Ser228, Asn229, and Ser271 each contribute to the isopentenyl diphosphate site.

It belongs to the IspH family. [4Fe-4S] cluster serves as cofactor.

The catalysed reaction is isopentenyl diphosphate + 2 oxidized [2Fe-2S]-[ferredoxin] + H2O = (2E)-4-hydroxy-3-methylbut-2-enyl diphosphate + 2 reduced [2Fe-2S]-[ferredoxin] + 2 H(+). The enzyme catalyses dimethylallyl diphosphate + 2 oxidized [2Fe-2S]-[ferredoxin] + H2O = (2E)-4-hydroxy-3-methylbut-2-enyl diphosphate + 2 reduced [2Fe-2S]-[ferredoxin] + 2 H(+). The protein operates within isoprenoid biosynthesis; dimethylallyl diphosphate biosynthesis; dimethylallyl diphosphate from (2E)-4-hydroxy-3-methylbutenyl diphosphate: step 1/1. It participates in isoprenoid biosynthesis; isopentenyl diphosphate biosynthesis via DXP pathway; isopentenyl diphosphate from 1-deoxy-D-xylulose 5-phosphate: step 6/6. In terms of biological role, catalyzes the conversion of 1-hydroxy-2-methyl-2-(E)-butenyl 4-diphosphate (HMBPP) into a mixture of isopentenyl diphosphate (IPP) and dimethylallyl diphosphate (DMAPP). Acts in the terminal step of the DOXP/MEP pathway for isoprenoid precursor biosynthesis. This chain is 4-hydroxy-3-methylbut-2-enyl diphosphate reductase, found in Vibrio vulnificus (strain CMCP6).